The primary structure comprises 100 residues: Large ribosomal subunit protein uL23 (100 aa).

Belongs to the universal ribosomal protein uL23 family. As to quaternary structure, part of the 50S ribosomal subunit. Contacts protein L29, and trigger factor when it is bound to the ribosome.

In terms of biological role, one of the early assembly proteins it binds 23S rRNA. One of the proteins that surrounds the polypeptide exit tunnel on the outside of the ribosome. Forms the main docking site for trigger factor binding to the ribosome. This Shewanella sp. (strain MR-4) protein is Large ribosomal subunit protein uL23.